Reading from the N-terminus, the 255-residue chain is Large ribosomal subunit protein uL4 (255 aa).

The protein belongs to the universal ribosomal protein uL4 family. As to quaternary structure, part of the 50S ribosomal subunit.

Functionally, one of the primary rRNA binding proteins, this protein initially binds near the 5'-end of the 23S rRNA. It is important during the early stages of 50S assembly. It makes multiple contacts with different domains of the 23S rRNA in the assembled 50S subunit and ribosome. Forms part of the polypeptide exit tunnel. The chain is Large ribosomal subunit protein uL4 from Pyrococcus abyssi (strain GE5 / Orsay).